A 129-amino-acid polypeptide reads, in one-letter code: Small ribosomal subunit protein uS11 (129 aa).

The interval 108–129 is disordered; that stretch reads EDVTPIPHDGTKPKGGKRGRRV.

This sequence belongs to the universal ribosomal protein uS11 family. As to quaternary structure, part of the 30S ribosomal subunit.

Its function is as follows. Located on the platform of the 30S subunit. This chain is Small ribosomal subunit protein uS11, found in Methanothrix thermoacetophila (strain DSM 6194 / JCM 14653 / NBRC 101360 / PT) (Methanosaeta thermophila).